A 145-amino-acid chain; its full sequence is Ubiquitin-conjugating enzyme E2 variant 1C (145 aa).

In terms of domain architecture, UBC core spans proline 12 to phenylalanine 145.

Belongs to the ubiquitin-conjugating enzyme family. Heterodimer with UBC35 or UBC36. Expressed in roots, shoots, leaves, stems and flowers, but not in pollen.

Has no ubiquitin ligase activity on its own. The heterodimer with UBC catalyzes the synthesis of non-canonical poly-ubiquitin chains that are linked through 'Lys-63'. This type of poly-ubiquitination does not lead to protein degradation by the proteasome. Mediates transcriptional activation of target genes. May play a role in the control of progress through the cell cycle and differentiation. May play a role in the error-free DNA repair pathway and contributes to the survival of cells after DNA damage. The sequence is that of Ubiquitin-conjugating enzyme E2 variant 1C (UEV1C) from Arabidopsis thaliana (Mouse-ear cress).